The following is a 548-amino-acid chain: Luciferin 4-monooxygenase (548 aa).

The Microbody targeting signal signature appears at 546–548; sequence AKM.

It belongs to the ATP-dependent AMP-binding enzyme family. Homodimer. Mg(2+) serves as cofactor.

The protein localises to the peroxisome. The catalysed reaction is firefly D-luciferin + ATP + O2 = firefly oxyluciferin + hnu + AMP + CO2 + diphosphate. Inhibited by ATP analogs and sodium deoxycholate. Activated by choline-containing phospholipids. Produces green light with a wavelength of 570 nm. This is Luciferin 4-monooxygenase from Luciola mingrelica (Southern Russian firefly).